A 58-amino-acid chain; its full sequence is Small ribosomal subunit protein uS14 (58 aa).

Residues 1–21 (MSESETEQTGEHASHRTGQTH) form a disordered region. Over residues 9–21 (TGEHASHRTGQTH) the composition is skewed to basic and acidic residues. Zn(2+)-binding residues include Cys23, Cys26, Cys41, and Cys44.

Belongs to the universal ribosomal protein uS14 family. Zinc-binding uS14 subfamily. Part of the 30S ribosomal subunit. Zn(2+) is required as a cofactor.

Functionally, binds 16S rRNA, required for the assembly of 30S particles. This is Small ribosomal subunit protein uS14 from Haloquadratum walsbyi (strain DSM 16790 / HBSQ001).